A 347-amino-acid polypeptide reads, in one-letter code: Haptoglobin (347 aa).

Residues 1 to 18 (MSALGAVIALLLWGQLFA) form the signal peptide. A Sushi domain is found at 31-88 (DGCPKPPEIANGYVEHLVRYQCKKYYRLRTEGDGVYTLNNEKQWTNKAVGDKLPECEA). 4 disulfide bridges follow: Cys-52-Cys-86, Cys-90-Cys-207, Cys-250-Cys-281, and Cys-292-Cys-322. The region spanning 103-345 (ILGGHLDAKG…IQDWVQKTIA (243 aa)) is the Peptidase S1 domain. Residues Asn-125, Asn-148, Asn-152, and Asn-182 are each glycosylated (N-linked (GlcNAc...) asparagine). The tract at residues 259–264 (VPEKKT) is interaction with CD163.

The protein belongs to the peptidase S1 family. Tetramer of two alpha and two beta chains; disulfide-linked. The hemoglobin/haptoglobin complex is composed of a haptoglobin dimer bound to two hemoglobin alpha-beta dimers. Interacts with CD163. Interacts with ERGIC3. As to expression, expressed by the liver and secreted in plasma.

Its subcellular location is the secreted. In terms of biological role, as a result of hemolysis, hemoglobin is found to accumulate in the kidney and is secreted in the urine. Haptoglobin captures, and combines with free plasma hemoglobin to allow hepatic recycling of heme iron and to prevent kidney damage. Haptoglobin also acts as an antioxidant, has antibacterial activity and plays a role in modulating many aspects of the acute phase response. Hemoglobin/haptoglobin complexes are rapidly cleared by the macrophage CD163 scavenger receptor expressed on the surface of liver Kupfer cells through an endocytic lysosomal degradation pathway. This Ateles geoffroyi (Black-handed spider monkey) protein is Haptoglobin (HP).